A 663-amino-acid polypeptide reads, in one-letter code: Zeaxanthin epoxidase, chloroplastic (663 aa).

Residues 1 to 50 (MYSTVFYTSVHPSTSAFSRKQLPLLISKDFPTELYHSLPCSRSLENGQIK) constitute a chloroplast transit peptide. FAD is bound by residues 81-109 (KVLV…LVFE) and 359-372 (TFSW…LLGD). One can recognise an FHA domain in the interval 547-611 (LVLSRDENMP…HGTWITDNEG (65 aa)).

It depends on FAD as a cofactor. As to expression, higher expression in leaves than in roots.

It is found in the plastid. It localises to the chloroplast membrane. The protein resides in the chloroplast thylakoid membrane. It catalyses the reaction all-trans-zeaxanthin + 4 reduced [2Fe-2S]-[ferredoxin] + 2 O2 + 4 H(+) = all-trans-violaxanthin + 4 oxidized [2Fe-2S]-[ferredoxin] + 2 H2O. The protein operates within plant hormone biosynthesis; abscisate biosynthesis. Converts zeaxanthin into antheraxanthin and subsequently violaxanthin. Involved in the epoxidation of zeaxanthin. Plays an important role in resistance to stresses, seed development and dormancy. This is Zeaxanthin epoxidase, chloroplastic (ABA2) from Nicotiana plumbaginifolia (Leadwort-leaved tobacco).